Consider the following 119-residue polypeptide: Large ribosomal subunit protein uL22 (119 aa).

This sequence belongs to the universal ribosomal protein uL22 family. As to quaternary structure, part of the 50S ribosomal subunit.

In terms of biological role, this protein binds specifically to 23S rRNA; its binding is stimulated by other ribosomal proteins, e.g. L4, L17, and L20. It is important during the early stages of 50S assembly. It makes multiple contacts with different domains of the 23S rRNA in the assembled 50S subunit and ribosome. The globular domain of the protein is located near the polypeptide exit tunnel on the outside of the subunit, while an extended beta-hairpin is found that lines the wall of the exit tunnel in the center of the 70S ribosome. The sequence is that of Large ribosomal subunit protein uL22 from Tropheryma whipplei (strain TW08/27) (Whipple's bacillus).